A 326-amino-acid polypeptide reads, in one-letter code: Olfactory receptor 10X1 (326 aa).

Topologically, residues 1-41 (MVLNVYCCFFQISDIQTMKINQTILKEFILVGFSVYPHVQT) are extracellular. N21 carries N-linked (GlcNAc...) asparagine glycosylation. A helical transmembrane segment spans residues 42 to 62 (FLFVVFFCLYLLTLAGNLIIM). Residues 63–70 (GLTWVDRS) are Cytoplasmic-facing. The helical transmembrane segment at 71 to 91 (LHTPMYLFLSALSFSETCYTL) threads the bilayer. Residues 92–115 (TIVPKMLEDLLAKDRSISVTGCSL) are Extracellular-facing. A disulfide bond links C113 and C205. Residues 116–136 (QMCFFLGLGGTNCIILTLMGY) form a helical membrane-spanning segment. Over 137–155 (DRFLAICNPLRYPLLMTNI) the chain is Cytoplasmic. The chain crosses the membrane as a helical span at residues 156–176 (VCGQLVASACTAGFFISLTET). The Extracellular portion of the chain corresponds to 177–213 (ALIFRDSFCRPNLVKHFFCHMLAVIRLSCIDSNHTEF). The N-linked (GlcNAc...) asparagine glycan is linked to N209. A helical transmembrane segment spans residues 214–233 (IITLISVSGLLGTLLLIILT). Residues 234–253 (DVFIISTVLRIPSAEGKQKA) are Cytoplasmic-facing. Residues 254–274 (FTTCASHLTVVIIHFGFASIV) form a helical membrane-spanning segment. At 275-284 (YLKPEASGDD) the chain is on the extracellular side. A helical transmembrane segment spans residues 285–305 (TLIAVPYTVITPFLSPIIFSL). At 306-326 (RNKDMKNAFRRMMGNTVALKK) the chain is on the cytoplasmic side.

Belongs to the G-protein coupled receptor 1 family.

It is found in the cell membrane. Its function is as follows. Odorant receptor. The protein is Olfactory receptor 10X1 (OR10X1) of Homo sapiens (Human).